The chain runs to 56 residues: Ovomucoid (56 aa).

The region spanning 6–56 is the Kazal-like domain; that stretch reads VDCSDHPKPACLQEQKPICGSDNKTYDNKCSFCNAVVDSNGTLTLSHFGKC. Disulfide bonds link cysteine 8-cysteine 38, cysteine 16-cysteine 35, and cysteine 24-cysteine 56. Asparagine 45 carries an N-linked (GlcNAc...) asparagine glycan.

It is found in the secreted. The polypeptide is Ovomucoid (Ortalis vetula (Plain chachalaca)).